The following is a 381-amino-acid chain: Bifunctional polyhydroxybutyrate synthase / ABC transporter periplasmic binding protein (381 aa).

The first 22 residues, 1-22 (MSKTFARSSLCALSMTIMTAHA), serve as a signal peptide directing secretion.

It belongs to the bacterial solute-binding protein PotD/PotF family.

It is found in the periplasm. It catalyses the reaction (3R)-3-hydroxybutanoyl-CoA + [(3R)-hydroxybutanoate](n) = [(3R)-hydroxybutanoate](n+1) + CoA. Functionally, catalyzes the formation of short polymers of R-3-hydroxybutyrate (cPHB). Involved in natural transformation. Probably part of the ABC transporter complex YdcSTUV. During natural transformation, may bind dsDNA and convey it to the inner membrane channel formed by YdcV. The chain is Bifunctional polyhydroxybutyrate synthase / ABC transporter periplasmic binding protein (ydcS) from Escherichia coli (strain K12).